Here is a 540-residue protein sequence, read N- to C-terminus: Chaperonin GroEL (540 aa).

Residues 29-32, 86-90, G413, 476-478, and D492 each bind ATP; these read TIGP, DGTTT, and NAA. Positions 520–540 are disordered; it reads DKPEPESNNQMPATPGMGGMM.

It belongs to the chaperonin (HSP60) family. Forms a cylinder of 14 subunits composed of two heptameric rings stacked back-to-back. Interacts with the co-chaperonin GroES.

The protein resides in the cytoplasm. It carries out the reaction ATP + H2O + a folded polypeptide = ADP + phosphate + an unfolded polypeptide.. In terms of biological role, together with its co-chaperonin GroES, plays an essential role in assisting protein folding. The GroEL-GroES system forms a nano-cage that allows encapsulation of the non-native substrate proteins and provides a physical environment optimized to promote and accelerate protein folding. This Ligilactobacillus salivarius (strain UCC118) (Lactobacillus salivarius) protein is Chaperonin GroEL.